Reading from the N-terminus, the 530-residue chain is MYSPSSPQSSEPMSPESDYGGGNSINNSNSSNNSSANQSPQFSVGKMKVDSEEKVKKRQVRLLKNRQSAALSRSRKKEYIANLESKAQELTHSTQELHVQYNKISSTTFETKSRLEFLEKSLRSLRMENEFLRTKFEDINNNNIKSHSRSNSSSSSLSSSPTTPNTTTTTTTSTTPVQLIINNHKSESSPLLLNSTNSSPTIASTLINTKDIINVSQNKNNNNNNNNNNNNNNNNNNNNNNNNNTTNLLDQQQQSPTPVLESLIKKDREREILIGINKINHFKFNNNNINNINNINNNNNNINNIVNDEEDEEKCKINSVEESNSNHLNNNFSNLSFSSPNVNSQPIYLTRVRSSSYHPSNYLGMESPTINAGHHMIIPTESLILSSNHHHHHHNNINNNSNNHYHHESSTASSSSGGNKLPSLYSITNNLGGGNSSSPSSSSTSSPSTSSPSTPKSMGFPSPIFIGSSGSGPSSSGSQINHRSSIIGLSKLKSYNNNNNSNNNNSPILYPISTNQYPSLINNNNNNNNY.

2 stretches are compositionally biased toward low complexity: residues 1–17 (MYSP…SPES) and 24–39 (SINN…ANQS). The tract at residues 1-76 (MYSPSSPQSS…QSAALSRSRK (76 aa)) is disordered. A bZIP domain is found at 55 to 118 (VKKRQVRLLK…FETKSRLEFL (64 aa)). The segment at 56–77 (KKRQVRLLKNRQSAALSRSRKK) is basic motif. The leucine-zipper stretch occupies residues 83–104 (LESKAQELTHSTQELHVQYNKI). Disordered regions lie at residues 142-177 (NNIK…TTPV), 216-258 (SQNK…SPTP), and 389-481 (HHHH…SQIN). Low complexity-rich tracts occupy residues 149-176 (RSNS…STTP) and 220-247 (NNNN…NTTN). Polar residues predominate over residues 248-257 (LLDQQQQSPT). The segment covering 436–478 (SSSPSSSSTSSPSTSSPSTPKSMGFPSPIFIGSSGSGPSSSGS) has biased composition (low complexity).

This sequence belongs to the bZIP family.

Its subcellular location is the nucleus. Probable transcriptional regulator. This chain is Probable basic-leucine zipper transcription factor L (bzpL), found in Dictyostelium discoideum (Social amoeba).